The following is a 166-amino-acid chain: Co-chaperone protein HscB homolog (166 aa).

Positions 3-75 (QYFTLFRIEP…IDRAAYLLKT (73 aa)) constitute a J domain.

Belongs to the HscB family. As to quaternary structure, interacts with HscA and stimulates its ATPase activity.

Its function is as follows. Co-chaperone involved in the maturation of iron-sulfur cluster-containing proteins. Seems to help targeting proteins to be folded toward HscA. This is Co-chaperone protein HscB homolog from Neisseria gonorrhoeae (strain NCCP11945).